Reading from the N-terminus, the 534-residue chain is MAAVSLRQGDLVWGKLGRYPPWPGKIVNPPKDLKKPRGKKCLFVKFFGTEDHAWIKVEQLKPYHAHKEEMIKANKGKRFQQAVDAVEEFLKKAKAKEHAKEHNSSDEKGKKGEGKGKKQTGEKRRKSSESSSHSPQKRSRDQSPRKRGRPPKDDKDSPSPQPSSLKKLAMKTVSRFSWPPPSTEDDLGSDSWLIHGHRTLGTEMILKKPSVTYQAITKRLKISEEDSGSTSIQAADSTAINGNIIPTDKKIGFLGLGLMGSGIVSNLLKMGHTVTVWNRTAEKCDLFIQEGAHMGRTPAEVVSTCDITFACVADPKAAKDLVLGPSGVLQGIRPGKCYVDMSTVDPETVAELAQVIVSRGGRFLEAPVSGNQQLSNDGMLVILAAGDQGVYEDCSSCFLAMGKTSFFLGEVGNAARMMLILNMVQGSFMATIAEGMTLAQVTGQSQQTLLDILNQGQLASIFLDQKCQNILQGNFKPDFYLKYIQKDLRLAIALGDSVNHPTPMAAAANEVYKRAKALDQSDNDMSAVYRAYIH.

The region spanning 8–66 (QGDLVWGKLGRYPPWPGKIVNPPKDLKKPRGKKCLFVKFFGTEDHAWIKVEQLKPYHAH) is the PWWP domain. Composition is skewed to basic and acidic residues over residues 93 to 122 (AKAK…QTGE) and 138 to 157 (RSRD…DKDS). The interval 93-168 (AKAKEHAKEH…SPQPSSLKKL (76 aa)) is disordered. The segment at residues 144 to 156 (PRKRGRPPKDDKD) is a DNA-binding region (a.T hook). The tract at residues 190–193 (DSWL) is interaction with histone H3. Residues 242 to 534 (GNIIPTDKKI…MSAVYRAYIH (293 aa)) are dehydrogenase domain. Residues 252 to 266 (GFLG…IVSN), T343, and K486 contribute to the NAD(+) site.

Belongs to the HIBADH-related family. NP60 subfamily. In terms of assembly, homotetramere. Binds to mononucleosomes.

The protein resides in the nucleus. It localises to the chromosome. Its function is as follows. Cytokine-like nuclear factor with chromatin gene reader activity involved in chromatin modification and regulation of gene expression. Acts as a nucleosome-destabilizing factor that is recruited to genes during transcriptional activation. Recognizes and binds histone H3 without a preference for specific epigenetic markers and also binds DNA. Interacts with KDM1B and promotes its histone demethylase activity by facilitating the capture of H3 tails, they form a multifunctional enzyme complex that modifies transcribed chromatin and facilitates Pol II transcription through nucleosomes. In Xenopus tropicalis (Western clawed frog), this protein is Cytokine-like nuclear factor N-PAC (glyr1).